The primary structure comprises 597 residues: Pentatricopeptide repeat-containing protein At2g21090 (597 aa).

PPR repeat units follow at residues 45–79 (PFDL…GFKR), 81–111 (NTLL…MHLR), 112–142 (NLYS…MPER), 143–177 (DVVS…GIKF), 178–212 (NEFS…GFLS), 213–243 (NVVL…MTVK), 244–274 (DIHI…MPEK), 275–309 (NPVS…GVKP), 310–344 (EQFT…NVRP), 345–375 (NAIV…CDDK), 377–411 (DCVF…RVQP), 412–447 (NRTT…GIVP), and 448–478 (DQEH…MPFE). The segment at 483 to 558 (IWNAILGVCR…EKAVSWIEIE (76 aa)) is type E motif. A type E(+) motif region spans residues 559–591 (KKVEAFTVSDGSHAHARKEEIYFILHNLAAVIE).

It belongs to the PPR family. PCMP-E subfamily.

This is Pentatricopeptide repeat-containing protein At2g21090 (PCMP-E48) from Arabidopsis thaliana (Mouse-ear cress).